Consider the following 150-residue polypeptide: UPF0506 protein SJCHGC02380 (150 aa).

The first 18 residues, 1-18, serve as a signal peptide directing secretion; the sequence is MNTCIQLLILCLVTVINS. N-linked (GlcNAc...) asparagine glycosylation is found at N20, N24, N36, N48, N52, and N110. 3 disulfides stabilise this stretch: C116-C130, C123-C134, and C129-C139.

Belongs to the UPF0506 family.

The protein localises to the secreted. This is UPF0506 protein SJCHGC02380 from Schistosoma japonicum (Blood fluke).